Here is a 61-residue protein sequence, read N- to C-terminus: Probable tautomerase SAV1363 (61 aa).

The active-site Proton acceptor; via imino nitrogen is Pro2.

Belongs to the 4-oxalocrotonate tautomerase family.

The sequence is that of Probable tautomerase SAV1363 from Staphylococcus aureus (strain Mu50 / ATCC 700699).